The chain runs to 509 residues: Transcription factor SOX-9 (509 aa).

2 disordered regions span residues 1–66 (MNLL…ESEE) and 160–271 (RLRV…IDFR). Positions 27–41 (SEGSRGSPCPSGSGS) are enriched in low complexity. Residues 42-52 (DTENTRPQENT) show a composition bias toward polar residues. Composition is skewed to basic and acidic residues over residues 56-66 (GEPDLKKESEE) and 160-174 (RLRV…DYKY). The tract at residues 63 to 103 (ESEEDKFPVCIREAVSQVLKGYDWTLVPMPVRVNGSSKNKP) is dimerization (DIM). Residues 63–103 (ESEEDKFPVCIREAVSQVLKGYDWTLVPMPVRVNGSSKNKP) form a PQA region. Serine 64 is subject to Phosphoserine. Positions 105 to 173 (VKRPMNAFMV…QHKKDHPDYK (69 aa)) form a DNA-binding region, HMG box. A Phosphoserine modification is found at serine 211. The transactivation domain (TAM) stretch occupies residues 224-307 (PGEHSGQSQG…LPPNGHPGVP (84 aa)). 2 consecutive short sequence motifs (9aaTAD) follow at residues 275–284 (IGELSSDVIS) and 290–298 (DVNEFDQYL). Disordered regions lie at residues 335–415 (WMSK…QHSP) and 420–439 (YSPF…TRSQ). The span at 341–359 (APPPPPHPPQQPPPVPQAP) shows a compositional bias: pro residues. Positions 360–369 (AQPQAALPQQ) are enriched in low complexity. Positions 380–415 (HTLTTLSSEPGQSQRTHIKTEQLSPSHYSEQQQHSP) are enriched in polar residues. The segment at 394–509 (RTHIKTEQLS…QPVYTQLTRP (116 aa)) is transactivation domain (TAC). Residue lysine 398 forms a Glycyl lysine isopeptide (Lys-Gly) (interchain with G-Cter in ubiquitin) linkage. Residues 460 to 468 (SVLYSTFTY) carry the 9aaTAD 3 motif. Residues 479–509 (PIADTSGVPSIPQTHSPQHWEQPVYTQLTRP) form a disordered region. The segment covering 485 to 509 (GVPSIPQTHSPQHWEQPVYTQLTRP) has biased composition (polar residues).

Homodimer; homodimerization is required for activity. Interacts (via C-terminus) with ZNF219; forming a complex that binds to the COL2A1 promoter and activates COL2A1 expression. Interacts with DDRGK1. Interacts with EP300/p300. Interacts with beta-catenin (CTNNB1); inhibiting CTNNB1 activity by competing with the binding sites of TCF/LEF within CTNNB1. In terms of processing, acetylated; acetylation impairs nuclear localization and ability to transactivate expression of target genes. Deacetylated by SIRT1. Post-translationally, phosphorylation at Ser-64 and Ser-211 by PKA increases transcriptional activity and may help delay chondrocyte maturation downstream of PTHLH/PTHrP signaling. Phosphorylation at either Ser-64 or Ser-211 is required for sumoylation, but phosphorylation is not dependent on sumoylation. Phosphorylated on tyrosine residues; tyrosine dephosphorylation by PTPN11/SHP2 blocks SOX9 phosphorylation by PKA and subsequent SUMOylation. Sumoylated; phosphorylation at either Ser-64 or Ser-211 is required for sumoylation. Sumoylation is induced by BMP signaling pathway. In terms of processing, ubiquitinated; ubiquitination leads to proteasomal degradation and is negatively regulated by DDRGK1.

Its subcellular location is the nucleus. Its function is as follows. Transcription factor that plays a key role in chondrocytes differentiation and skeletal development. Specifically binds the 5'-ACAAAG-3' DNA motif present in enhancers and super-enhancers and promotes expression of genes important for chondrogenesis, including cartilage matrix protein-coding genes COL2A1, COL4A2, COL9A1, COL11A2 and ACAN, SOX5 and SOX6. Also binds to some promoter regions. Plays a central role in successive steps of chondrocyte differentiation. Absolutely required for precartilaginous condensation, the first step in chondrogenesis during which skeletal progenitors differentiate into prechondrocytes. Together with SOX5 and SOX6, required for overt chondrogenesis when condensed prechondrocytes differentiate into early stage chondrocytes, the second step in chondrogenesis. Later, required to direct hypertrophic maturation and block osteoblast differentiation of growth plate chondrocytes: maintains chondrocyte columnar proliferation, delays prehypertrophy and then prevents osteoblastic differentiation of chondrocytes by lowering beta-catenin (CTNNB1) signaling and RUNX2 expression. Also required for chondrocyte hypertrophy, both indirectly, by keeping the lineage fate of chondrocytes, and directly, by remaining present in upper hypertrophic cells and transactivating COL10A1 along with MEF2C. Low lipid levels are the main nutritional determinant for chondrogenic commitment of skeletal progenitor cells: when lipids levels are low, FOXO (FOXO1 and FOXO3) transcription factors promote expression of SOX9, which induces chondrogenic commitment and suppresses fatty acid oxidation. Mechanistically, helps, but is not required, to remove epigenetic signatures of transcriptional repression and deposit active promoter and enhancer marks at chondrocyte-specific genes. Acts in cooperation with the Hedgehog pathway-dependent GLI (GLI1 and GLI3) transcription factors. In addition to cartilage development, also acts as a regulator of proliferation and differentiation in epithelial stem/progenitor cells: involved in the lung epithelium during branching morphogenesis, by balancing proliferation and differentiation and regulating the extracellular matrix. Controls epithelial branching during kidney development. The protein is Transcription factor SOX-9 (SOX9) of Sus scrofa (Pig).